A 180-amino-acid chain; its full sequence is Der GTPase-activating protein YihI (180 aa).

Disordered stretches follow at residues 1 to 88 (MTRK…KERR) and 147 to 180 (PEVTEEAPVRKGAKTDEDLLDQFENMDLDSFGKE). 4 stretches are compositionally biased toward basic and acidic residues: residues 18 to 33 (FREKSTTQVDVEARKS), 50 to 67 (EALDPKHYANGQKKDPRL), 77 to 88 (VEKKPTTKKERR), and 153 to 163 (APVRKGAKTDE). The segment covering 164–173 (DLLDQFENMD) has biased composition (acidic residues).

This sequence belongs to the YihI family. Interacts with Der.

Functionally, a GTPase-activating protein (GAP) that modifies Der/EngA GTPase function. May play a role in ribosome biogenesis. This is Der GTPase-activating protein YihI from Photobacterium profundum (strain SS9).